We begin with the raw amino-acid sequence, 145 residues long: 3-hydroxyacyl-[acyl-carrier-protein] dehydratase FabZ (145 aa).

His49 is an active-site residue.

The protein belongs to the thioester dehydratase family. FabZ subfamily.

Its subcellular location is the cytoplasm. It carries out the reaction a (3R)-hydroxyacyl-[ACP] = a (2E)-enoyl-[ACP] + H2O. In terms of biological role, involved in unsaturated fatty acids biosynthesis. Catalyzes the dehydration of short chain beta-hydroxyacyl-ACPs and long chain saturated and unsaturated beta-hydroxyacyl-ACPs. The protein is 3-hydroxyacyl-[acyl-carrier-protein] dehydratase FabZ of Rickettsia typhi (strain ATCC VR-144 / Wilmington).